The following is a 363-amino-acid chain: dTDP-L-rhamnose 4-epimerase (363 aa).

Residues 18–24 (GGAGFIG), 68–69 (DV), and 90–94 (LAAET) each bind NAD(+). Serine 136 and tyrosine 191 together coordinate substrate. The NAD(+) site is built by tyrosine 191 and lysine 195. Tyrosine 191 serves as the catalytic Proton acceptor. Asparagine 220 and arginine 259 together coordinate substrate.

The protein belongs to the NAD(P)-dependent epimerase/dehydratase family. Requires NAD(+) as cofactor.

The catalysed reaction is dTDP-6-deoxy-beta-L-talose = dTDP-beta-L-rhamnose. Its pathway is bacterial outer membrane biogenesis; LPS O-antigen biosynthesis. Catalyzes the interconvertion of dTDP-6-deoxy-L-talose and dTDP-L-rhamnose. The equilibrium is strongly toward dTDP-L-rhamnose. This is dTDP-L-rhamnose 4-epimerase (wbiB) from Burkholderia thailandensis (strain ATCC 700388 / DSM 13276 / CCUG 48851 / CIP 106301 / E264).